The sequence spans 355 residues: NADH dehydrogenase-like protein YutJ (355 aa).

This sequence belongs to the NADH dehydrogenase family. FAD is required as a cofactor.

The protein is NADH dehydrogenase-like protein YutJ (yutJ) of Bacillus subtilis (strain 168).